Reading from the N-terminus, the 358-residue chain is Phosphoserine aminotransferase (358 aa).

Residue Arg41 coordinates L-glutamate. Residues 75–76 (AS), Trp100, Thr148, Asp167, and Gln190 each bind pyridoxal 5'-phosphate. Lys191 bears the N6-(pyridoxal phosphate)lysine mark. Pyridoxal 5'-phosphate is bound at residue 233-234 (NT).

Belongs to the class-V pyridoxal-phosphate-dependent aminotransferase family. SerC subfamily. In terms of assembly, homodimer. The cofactor is pyridoxal 5'-phosphate.

The protein localises to the cytoplasm. The catalysed reaction is O-phospho-L-serine + 2-oxoglutarate = 3-phosphooxypyruvate + L-glutamate. The enzyme catalyses 4-(phosphooxy)-L-threonine + 2-oxoglutarate = (R)-3-hydroxy-2-oxo-4-phosphooxybutanoate + L-glutamate. Its pathway is amino-acid biosynthesis; L-serine biosynthesis; L-serine from 3-phospho-D-glycerate: step 2/3. The protein operates within cofactor biosynthesis; pyridoxine 5'-phosphate biosynthesis; pyridoxine 5'-phosphate from D-erythrose 4-phosphate: step 3/5. Catalyzes the reversible conversion of 3-phosphohydroxypyruvate to phosphoserine and of 3-hydroxy-2-oxo-4-phosphonooxybutanoate to phosphohydroxythreonine. The protein is Phosphoserine aminotransferase of Campylobacter jejuni subsp. doylei (strain ATCC BAA-1458 / RM4099 / 269.97).